Here is a 213-residue protein sequence, read N- to C-terminus: Endonuclease III (213 aa).

Residues 108–127 (FKELIKLPGVGRKTANVVLN) enclose the HhH domain. [4Fe-4S] cluster contacts are provided by Cys-187, Cys-194, Cys-197, and Cys-203.

Belongs to the Nth/MutY family. Requires [4Fe-4S] cluster as cofactor.

The enzyme catalyses 2'-deoxyribonucleotide-(2'-deoxyribose 5'-phosphate)-2'-deoxyribonucleotide-DNA = a 3'-end 2'-deoxyribonucleotide-(2,3-dehydro-2,3-deoxyribose 5'-phosphate)-DNA + a 5'-end 5'-phospho-2'-deoxyribonucleoside-DNA + H(+). Its function is as follows. DNA repair enzyme that has both DNA N-glycosylase activity and AP-lyase activity. The DNA N-glycosylase activity releases various damaged pyrimidines from DNA by cleaving the N-glycosidic bond, leaving an AP (apurinic/apyrimidinic) site. The AP-lyase activity cleaves the phosphodiester bond 3' to the AP site by a beta-elimination, leaving a 3'-terminal unsaturated sugar and a product with a terminal 5'-phosphate. The chain is Endonuclease III from Rickettsia felis (strain ATCC VR-1525 / URRWXCal2) (Rickettsia azadi).